A 535-amino-acid polypeptide reads, in one-letter code: CTP synthase (535 aa).

An amidoligase domain region spans residues 1-267 (MTKYIFVTGG…DKLVCEHMKL (267 aa)). Ser-13 contributes to the CTP binding site. Ser-13 provides a ligand contact to UTP. 14-19 (SLGKGI) is an ATP binding site. L-glutamine is bound at residue Tyr-54. Asp-71 is a binding site for ATP. Residues Asp-71 and Glu-141 each contribute to the Mg(2+) site. CTP is bound by residues 148 to 150 (DIE), 188 to 193 (KTKPTQ), and Lys-224. Residues 188–193 (KTKPTQ) and Lys-224 each bind UTP. Residues 292–534 (TIGLVGKYVE…IGASVEAANQ (243 aa)) form the Glutamine amidotransferase type-1 domain. Position 354 (Gly-354) interacts with L-glutamine. The active-site Nucleophile; for glutamine hydrolysis is Cys-381. L-glutamine is bound by residues 382–385 (LGMQ), Glu-405, and Arg-462. Residues His-507 and Glu-509 contribute to the active site.

The protein belongs to the CTP synthase family. In terms of assembly, homotetramer. Interacts with BrxC.

It catalyses the reaction UTP + L-glutamine + ATP + H2O = CTP + L-glutamate + ADP + phosphate + 2 H(+). The enzyme catalyses L-glutamine + H2O = L-glutamate + NH4(+). It carries out the reaction UTP + NH4(+) + ATP = CTP + ADP + phosphate + 2 H(+). It participates in pyrimidine metabolism; CTP biosynthesis via de novo pathway; CTP from UDP: step 2/2. Its activity is regulated as follows. Allosterically activated by GTP, when glutamine is the substrate; GTP has no effect on the reaction when ammonia is the substrate. The allosteric effector GTP functions by stabilizing the protein conformation that binds the tetrahedral intermediate(s) formed during glutamine hydrolysis. Inhibited by the product CTP, via allosteric rather than competitive inhibition. Functionally, catalyzes the ATP-dependent amination of UTP to CTP with either L-glutamine or ammonia as the source of nitrogen. Regulates intracellular CTP levels through interactions with the four ribonucleotide triphosphates. This chain is CTP synthase, found in Bacillus subtilis (strain 168).